The following is a 150-amino-acid chain: Ribosome maturation factor RimP (150 aa).

The protein belongs to the RimP family.

The protein resides in the cytoplasm. Its function is as follows. Required for maturation of 30S ribosomal subunits. This chain is Ribosome maturation factor RimP, found in Thermotoga neapolitana (strain ATCC 49049 / DSM 4359 / NBRC 107923 / NS-E).